The sequence spans 394 residues: 1-deoxy-D-xylulose 5-phosphate reductoisomerase (394 aa).

NADPH is bound by residues Thr-12, Gly-13, Ser-14, Ile-15, Gly-38, Asn-41, and Asn-132. Lys-133 is a 1-deoxy-D-xylulose 5-phosphate binding site. Residue Glu-134 coordinates NADPH. Mn(2+) is bound at residue Asp-156. Residues Ser-157, Glu-158, Ser-182, and His-205 each coordinate 1-deoxy-D-xylulose 5-phosphate. Position 158 (Glu-158) interacts with Mn(2+). Gly-211 contacts NADPH. 1-deoxy-D-xylulose 5-phosphate is bound by residues Ser-218, Asn-223, Lys-224, and Glu-227. Residue Glu-227 participates in Mn(2+) binding.

This sequence belongs to the DXR family. Requires Mg(2+) as cofactor. Mn(2+) is required as a cofactor.

The catalysed reaction is 2-C-methyl-D-erythritol 4-phosphate + NADP(+) = 1-deoxy-D-xylulose 5-phosphate + NADPH + H(+). The protein operates within isoprenoid biosynthesis; isopentenyl diphosphate biosynthesis via DXP pathway; isopentenyl diphosphate from 1-deoxy-D-xylulose 5-phosphate: step 1/6. Catalyzes the NADPH-dependent rearrangement and reduction of 1-deoxy-D-xylulose-5-phosphate (DXP) to 2-C-methyl-D-erythritol 4-phosphate (MEP). The polypeptide is 1-deoxy-D-xylulose 5-phosphate reductoisomerase (Arthrobacter sp. (strain FB24)).